Reading from the N-terminus, the 581-residue chain is Leucine aminopeptidase 3, chloroplastic (581 aa).

A chloroplast-targeting transit peptide spans 1 to 50; sequence MAVTLVTSCASSSRFHFRSFSSSPSSLSSCFVRFQLLSRLRVSFAITPLY. Mn(2+)-binding residues include Lys350 and Asp355. Residue Lys362 is part of the active site. 3 residues coordinate Mn(2+): Asp375, Asp435, and Glu437. The active site involves Arg439.

It belongs to the peptidase M17 family. In terms of assembly, homohexamer (dimer of homotrimers). It depends on Mn(2+) as a cofactor.

Its subcellular location is the plastid. The protein localises to the chloroplast. It carries out the reaction Release of an N-terminal amino acid, Xaa-|-Yaa-, in which Xaa is preferably Leu, but may be other amino acids including Pro although not Arg or Lys, and Yaa may be Pro. Amino acid amides and methyl esters are also readily hydrolyzed, but rates on arylamides are exceedingly low.. It catalyses the reaction Release of N-terminal proline from a peptide.. Functionally, presumably involved in the processing and regular turnover of intracellular proteins. Catalyzes the removal of unsubstituted N-terminal amino acids from various peptides. Possesses Cys-Gly dipeptidase activity. This chain is Leucine aminopeptidase 3, chloroplastic, found in Arabidopsis thaliana (Mouse-ear cress).